A 319-amino-acid polypeptide reads, in one-letter code: Beta-ketoacyl-[acyl-carrier-protein] synthase III (319 aa).

Residues Cys-113 and His-246 contribute to the active site. An ACP-binding region spans residues 247-251 (QANLR). Residue Asn-276 is part of the active site.

The protein belongs to the thiolase-like superfamily. FabH family. In terms of assembly, homodimer.

Its subcellular location is the cytoplasm. It catalyses the reaction malonyl-[ACP] + acetyl-CoA + H(+) = 3-oxobutanoyl-[ACP] + CO2 + CoA. It participates in lipid metabolism; fatty acid biosynthesis. Catalyzes the condensation reaction of fatty acid synthesis by the addition to an acyl acceptor of two carbons from malonyl-ACP. Catalyzes the first condensation reaction which initiates fatty acid synthesis and may therefore play a role in governing the total rate of fatty acid production. Possesses both acetoacetyl-ACP synthase and acetyl transacylase activities. Its substrate specificity determines the biosynthesis of branched-chain and/or straight-chain of fatty acids. This chain is Beta-ketoacyl-[acyl-carrier-protein] synthase III, found in Chromobacterium violaceum (strain ATCC 12472 / DSM 30191 / JCM 1249 / CCUG 213 / NBRC 12614 / NCIMB 9131 / NCTC 9757 / MK).